Reading from the N-terminus, the 302-residue chain is Phosphoribosylaminoimidazole-succinocarboxamide synthase (302 aa).

The protein belongs to the SAICAR synthetase family.

It catalyses the reaction 5-amino-1-(5-phospho-D-ribosyl)imidazole-4-carboxylate + L-aspartate + ATP = (2S)-2-[5-amino-1-(5-phospho-beta-D-ribosyl)imidazole-4-carboxamido]succinate + ADP + phosphate + 2 H(+). The protein operates within purine metabolism; IMP biosynthesis via de novo pathway; 5-amino-1-(5-phospho-D-ribosyl)imidazole-4-carboxamide from 5-amino-1-(5-phospho-D-ribosyl)imidazole-4-carboxylate: step 1/2. The protein is Phosphoribosylaminoimidazole-succinocarboxamide synthase of Ralstonia nicotianae (strain ATCC BAA-1114 / GMI1000) (Ralstonia solanacearum).